A 706-amino-acid polypeptide reads, in one-letter code: Coiled-coil domain-containing protein 177 (706 aa).

Residues 1 to 11 (MVDPVPEEEKE) show a composition bias toward acidic residues. 3 disordered regions span residues 1–63 (MVDP…GGRR), 179–262 (ASAL…LREL), and 268–287 (ASAR…NPLG). Composition is skewed to low complexity over residues 28 to 49 (PPDA…AAAP) and 179 to 209 (ASAL…RRTS). Positions 210–221 (PSPPARSRPPPA) are enriched in pro residues. Residues 242-257 (ALSSESGASSSSYSGE) are compositionally biased toward low complexity. Residue Ser-310 is modified to Phosphoserine. Residues 360–624 (AAHGQWEQQR…QTRLEKERAQ (265 aa)) are a coiled coil. 4 disordered regions span residues 364–386 (QWEQ…KQRA), 398–425 (VEER…RSEE), 448–580 (DDRL…EREH), and 651–706 (ERSE…LDRK). A compositionally biased stretch (basic and acidic residues) spans 368-386 (QRVRAEQRREREEREKQRA). Basic and acidic residues-rich tracts occupy residues 448 to 529 (DDRL…REGL), 548 to 580 (QEQR…EREH), and 651 to 663 (ERSE…RRSA). Residues 664–674 (LESARSTARAS) are compositionally biased toward low complexity. Positions 676–706 (HVREKVREETNTRSFDRMVREAQLHASLDRK) are enriched in basic and acidic residues.

This is Coiled-coil domain-containing protein 177 (Ccdc177) from Mus musculus (Mouse).